The following is an 81-amino-acid chain: Large ribosomal subunit protein bL31B (81 aa).

The protein belongs to the bacterial ribosomal protein bL31 family. Type B subfamily. As to quaternary structure, part of the 50S ribosomal subunit.

In Bacillus anthracis (strain A0248), this protein is Large ribosomal subunit protein bL31B.